The chain runs to 444 residues: Glutamate-1-semialdehyde 2,1-aminomutase (444 aa).

Position 267 is an N6-(pyridoxal phosphate)lysine (Lys267).

The protein belongs to the class-III pyridoxal-phosphate-dependent aminotransferase family. HemL subfamily. Homodimer. It depends on pyridoxal 5'-phosphate as a cofactor.

Its subcellular location is the cytoplasm. It carries out the reaction (S)-4-amino-5-oxopentanoate = 5-aminolevulinate. It participates in porphyrin-containing compound metabolism; protoporphyrin-IX biosynthesis; 5-aminolevulinate from L-glutamyl-tRNA(Glu): step 2/2. The protein is Glutamate-1-semialdehyde 2,1-aminomutase of Xylella fastidiosa (strain 9a5c).